We begin with the raw amino-acid sequence, 129 residues long: Small ribosomal subunit protein uS11 (129 aa).

This sequence belongs to the universal ribosomal protein uS11 family. As to quaternary structure, part of the 30S ribosomal subunit. Interacts with proteins S7 and S18. Binds to IF-3.

Located on the platform of the 30S subunit, it bridges several disparate RNA helices of the 16S rRNA. Forms part of the Shine-Dalgarno cleft in the 70S ribosome. This chain is Small ribosomal subunit protein uS11, found in Levilactobacillus brevis (strain ATCC 367 / BCRC 12310 / CIP 105137 / JCM 1170 / LMG 11437 / NCIMB 947 / NCTC 947) (Lactobacillus brevis).